Consider the following 240-residue polypeptide: Ornithine decarboxylase antizyme (240 aa).

2 disordered regions span residues 18–45 and 69–95; these read RSEPISSSNRATKRTISSSSSSSSSSAG and DHDRASPLKEYNRKTSIDSTTTASSEF. The span at 21–33 shows a compositional bias: polar residues; it reads PISSSNRATKRTI. Residues 34 to 43 show a composition bias toward low complexity; it reads SSSSSSSSSS. Residues 69 to 84 are compositionally biased toward basic and acidic residues; the sequence is DHDRASPLKEYNRKTS. The segment covering 85–95 has biased composition (polar residues); sequence IDSTTTASSEF.

This sequence belongs to the ODC antizyme family. In terms of assembly, interacts with ODC1 and thereby sterically blocks ODC homodimerization. Preferentially expressed in adult female midguts.

Ornithine decarboxylase (ODC) antizyme protein that negatively regulates ODC activity and intracellular polyamine biosynthesis and uptake in response to increased intracellular polyamine levels. Binds to ODC monomers, inhibiting the assembly of the functional ODC homodimer, and targets the monomers for ubiquitin-independent proteolytic destruction by the 26S proteasome. The polypeptide is Ornithine decarboxylase antizyme (Oda) (Aedes aegypti (Yellowfever mosquito)).